The primary structure comprises 266 residues: Undecaprenyl-diphosphatase (266 aa).

8 helical membrane passes run 2–22 (INIL…FLPI), 39–59 (LPII…IIYY), 86–106 (LKLI…GTFI), 112–132 (MFIL…ILML), 145–165 (ILLV…PGIS), 184–204 (AFEI…LFKY), 212–232 (MVLN…VGII), and 246–266 (LYYF…FFRI).

It belongs to the UppP family.

The protein resides in the cell inner membrane. It carries out the reaction di-trans,octa-cis-undecaprenyl diphosphate + H2O = di-trans,octa-cis-undecaprenyl phosphate + phosphate + H(+). In terms of biological role, catalyzes the dephosphorylation of undecaprenyl diphosphate (UPP). Confers resistance to bacitracin. This is Undecaprenyl-diphosphatase from Borrelia garinii subsp. bavariensis (strain ATCC BAA-2496 / DSM 23469 / PBi) (Borreliella bavariensis).